Reading from the N-terminus, the 212-residue chain is MPVHEIRHPLIRHKLGLMRRADISTKNFRELAQEVGALLTYEATKDLPLEQYEIPGWAGPVTVEKISGKKITVVPILRAGIGMLDGVLSLIPGAKVSAVGVARNEETLEARTYLEKLAPDIAERRSLIIDPMLATGGSMVATIDLLKKAGSKEIRAMVLVAAPEGIEAVRKAHPDVIIYTASIDEKLDENGYIIPGLGDAGDKIFGTKQKEA.

Residues Arg-78, Arg-103, and 130–138 (DPMLATGGS) contribute to the 5-phospho-alpha-D-ribose 1-diphosphate site. Uracil contacts are provided by residues Ile-193 and 198–200 (GDA). Asp-199 contributes to the 5-phospho-alpha-D-ribose 1-diphosphate binding site.

This sequence belongs to the UPRTase family. It depends on Mg(2+) as a cofactor.

The catalysed reaction is UMP + diphosphate = 5-phospho-alpha-D-ribose 1-diphosphate + uracil. The protein operates within pyrimidine metabolism; UMP biosynthesis via salvage pathway; UMP from uracil: step 1/1. Its activity is regulated as follows. Allosterically activated by GTP. In terms of biological role, catalyzes the conversion of uracil and 5-phospho-alpha-D-ribose 1-diphosphate (PRPP) to UMP and diphosphate. In Pseudomonas aeruginosa (strain LESB58), this protein is Uracil phosphoribosyltransferase.